The chain runs to 490 residues: Calcium-dependent protein kinase 12 (490 aa).

A Protein kinase domain is found at 22–280 (YFLGQVLGQG…AHQVLCHPWI (259 aa)). ATP contacts are provided by residues 28-36 (LGQGQFGTT) and K51. The Proton acceptor role is filled by D146. S186 is modified (phosphoserine). Positions 286-316 (APDKPLDCAVVSRLKKFSAMNKLKKMALRVI) are autoinhibitory domain. 4 consecutive EF-hand domains span residues 323–358 (EEIGGLKELFKMIDTDKSGTITFEELKDSMRRVGSE), 359–394 (LMESEIQELLRAADVDESGTIDYGEFLAATIHLNKL), 395–430 (EREENLVAAFSFFDKDASGYITIEELQQAWKEFGIN), and 434–464 (LDEMIKDIDQDNDGQIDYGEFVAMMRKGNGT). Ca(2+) contacts are provided by D336, D338, S340, T342, E347, D372, D374, S376, T378, E383, D408, D410, S412, Y414, E419, D442, D444, D446, Q448, and E453.

It belongs to the protein kinase superfamily. Ser/Thr protein kinase family. CDPK subfamily. In terms of assembly, interacts weakly with DI19. Ubiquitously expressed.

It carries out the reaction L-seryl-[protein] + ATP = O-phospho-L-seryl-[protein] + ADP + H(+). The catalysed reaction is L-threonyl-[protein] + ATP = O-phospho-L-threonyl-[protein] + ADP + H(+). Its activity is regulated as follows. Activated by calcium. Autophosphorylation may play an important role in the regulation of the kinase activity. May play a role in signal transduction pathways that involve calcium as a second messenger. The protein is Calcium-dependent protein kinase 12 (CPK12) of Arabidopsis thaliana (Mouse-ear cress).